The sequence spans 362 residues: UDP-3-O-acylglucosamine N-acyltransferase 1 (362 aa).

H258 (proton acceptor) is an active-site residue.

Belongs to the transferase hexapeptide repeat family. LpxD subfamily. Homotrimer.

It catalyses the reaction a UDP-3-O-[(3R)-3-hydroxyacyl]-alpha-D-glucosamine + a (3R)-hydroxyacyl-[ACP] = a UDP-2-N,3-O-bis[(3R)-3-hydroxyacyl]-alpha-D-glucosamine + holo-[ACP] + H(+). It participates in bacterial outer membrane biogenesis; LPS lipid A biosynthesis. Catalyzes the N-acylation of UDP-3-O-acylglucosamine using 3-hydroxyacyl-ACP as the acyl donor. Is involved in the biosynthesis of lipid A, a phosphorylated glycolipid that anchors the lipopolysaccharide to the outer membrane of the cell. The sequence is that of UDP-3-O-acylglucosamine N-acyltransferase 1 from Nitrobacter winogradskyi (strain ATCC 25391 / DSM 10237 / CIP 104748 / NCIMB 11846 / Nb-255).